A 293-amino-acid polypeptide reads, in one-letter code: Ribosomal protein L11 methyltransferase (293 aa).

Residues threonine 145, glycine 166, aspartate 188, and asparagine 230 each coordinate S-adenosyl-L-methionine.

This sequence belongs to the methyltransferase superfamily. PrmA family.

Its subcellular location is the cytoplasm. The enzyme catalyses L-lysyl-[protein] + 3 S-adenosyl-L-methionine = N(6),N(6),N(6)-trimethyl-L-lysyl-[protein] + 3 S-adenosyl-L-homocysteine + 3 H(+). Its function is as follows. Methylates ribosomal protein L11. In Sodalis glossinidius (strain morsitans), this protein is Ribosomal protein L11 methyltransferase.